The primary structure comprises 494 residues: Cytochrome P450 71D94 (494 aa).

The helical; Signal-anchor for type II membrane protein transmembrane segment at 1–21 (MELNLLLVIIILVATYTVSLL) threads the bilayer. Cys434 contributes to the heme binding site.

Belongs to the cytochrome P450 family. Heme serves as cofactor.

The protein resides in the endoplasmic reticulum membrane. In terms of biological role, cytochrome P450 oxygenase of undefined substrate. Not active with limonene, (+)- or (-)-piperitone, (-)-isopiperitone, piperitenone or (+)-pulegone. This Mentha gracilis (Gingermint) protein is Cytochrome P450 71D94 (CYP71D94).